The following is a 99-amino-acid chain: MRIAKVRGTVVSTYKEPSLQGVKFLVVQFLDEAGQALQEYEVAADMVGAGVDEWVLISRGSQARHVRDCQERPVDAAVIAIIDTVNVENRSVYDKREHS.

One can recognise a BMV domain in the interval 1 to 83; that stretch reads MRIAKVRGTV…VDAAVIAIID (83 aa).

This sequence belongs to the CcmL/EutN family. CcmL subfamily. As to quaternary structure, homopentamer. Interacts with full-length CcmM.

Its subcellular location is the carboxysome. In terms of biological role, probably forms vertices in the carboxysome, a polyhedral inclusion where RuBisCO (ribulose bisphosphate carboxylase, rbcL-rbcS) is sequestered. Has been modeled to induce curvature upon insertion into an otherwise flat hexagonal molecular layer of CcmK subunits. Its function is as follows. Beta-carboxysome assembly initiates when soluble RuBisCO is condensed into a liquid matrix in a pre-carboxysome by the RbcS-like domains of probably both CcmM58 and CcmM35. CcmN interacts with the N-terminus of CcmM58, and then recruits the CcmK2 major shell protein via CcmN's encapsulation peptide. Shell formation requires CcmK proteins and CcmO. CcmL caps the otherwise elongated carboxysome. Once fully encapsulated carboxysomes are formed, they migrate within the cell probably via interactions with the cytoskeleton. The protein is Carboxysome shell vertex protein CcmL of Synechococcus elongatus (strain ATCC 33912 / PCC 7942 / FACHB-805) (Anacystis nidulans R2).